The chain runs to 199 residues: Probable molybdenum cofactor guanylyltransferase (199 aa).

GTP is bound by residues 9–11, K21, D69, and D100; that span reads LAG. Mg(2+) is bound at residue D100.

Belongs to the MobA family. Mg(2+) is required as a cofactor.

It localises to the cytoplasm. The catalysed reaction is Mo-molybdopterin + GTP + H(+) = Mo-molybdopterin guanine dinucleotide + diphosphate. Functionally, transfers a GMP moiety from GTP to Mo-molybdopterin (Mo-MPT) cofactor (Moco or molybdenum cofactor) to form Mo-molybdopterin guanine dinucleotide (Mo-MGD) cofactor. This chain is Probable molybdenum cofactor guanylyltransferase, found in Bacillus cytotoxicus (strain DSM 22905 / CIP 110041 / 391-98 / NVH 391-98).